Reading from the N-terminus, the 308-residue chain is 3'(2'),5'-bisphosphate nucleotidase 1 (308 aa).

Ala2 is subject to N-acetylalanine. Asp51 serves as the catalytic Proton acceptor. The Mg(2+) site is built by Glu74, Asp117, Val119, and Asp120. The active-site Proton acceptor is the Thr122. Position 122 is a phosphothreonine (Thr122). Residues Thr195, His198, Gly220, and Lys224 each contribute to the AMP site. A Phosphoserine modification is found at Ser240. N6-succinyllysine is present on Lys244. A Mg(2+)-binding site is contributed by Asp247.

Belongs to the inositol monophosphatase superfamily. Requires Mg(2+) as cofactor. As to expression, highly expressed in heart, brain, spleen, lung, liver, skeletal muscle, kidney and testis.

It catalyses the reaction adenosine 3',5'-bisphosphate + H2O = AMP + phosphate. The catalysed reaction is adenosine 2',5'-bisphosphate + H2O = AMP + phosphate. The enzyme catalyses 3'-phosphoadenylyl sulfate + H2O = adenosine 5'-phosphosulfate + phosphate. It carries out the reaction 1D-myo-inositol 1,4-bisphosphate + H2O = 1D-myo-inositol 4-phosphate + phosphate. It catalyses the reaction 1D-myo-inositol 1,3,4-trisphosphate + H2O = 1D-myo-inositol 3,4-bisphosphate + phosphate. With respect to regulation, inhibited by Li(+) and Ca(2+), but not by Na(+). Functionally, phosphatase that converts 3'(2')-phosphoadenosine 5'-phosphate (PAP) to AMP and adenosine 3'-phosphate 5'-phosphosulfate (PAPS) to adenosine 5'-phosphosulfate (APS). Is also able to hydrolyze inositol 1,4-bisphosphate (Ins(1,4)P2) and inositol 1,3,4-trisphosphate (Ins(1,3,4)P3), but is not active on AMP, 3'-AMP, fructose-1,6-bisphosphate, Ins(1)P, Ins(2)P and Ins(1,4,5)P3. Probably prevents the toxic accumulation of PAP, a compound which inhibits a variety of proteins, including PAPS-utilizing enzymes such as sulfotransferases, and RNA processing enzymes. Could also play a role in inositol recycling and phosphoinositide metabolism. The chain is 3'(2'),5'-bisphosphate nucleotidase 1 (Bpnt1) from Rattus norvegicus (Rat).